A 67-amino-acid polypeptide reads, in one-letter code: MRVDVYDNNVDQAIRVLKKKMNREGMFREMKKRKFFEKPSERRRRKKAEAIRRLRKKLRRASLAGLG.

Belongs to the bacterial ribosomal protein bS21 family.

In Magnetococcus marinus (strain ATCC BAA-1437 / JCM 17883 / MC-1), this protein is Small ribosomal subunit protein bS21.